A 132-amino-acid polypeptide reads, in one-letter code: Myelin P2 protein (132 aa).

S2 is subject to N-acetylserine. Residue R107 participates in (9Z)-octadecenoate binding. A hexadecanoate-binding site is contributed by R107. Cysteines 118 and 125 form a disulfide. 127–129 (RIY) contributes to the (9Z)-octadecenoate binding site. 127–129 (RIY) contributes to the hexadecanoate binding site.

This sequence belongs to the calycin superfamily. Fatty-acid binding protein (FABP) family. Monomer. Detected in spinal cord (at protein level).

It localises to the cytoplasm. Its function is as follows. May play a role in lipid transport protein in Schwann cells. May bind cholesterol. The chain is Myelin P2 protein (PMP2) from Equus caballus (Horse).